A 586-amino-acid polypeptide reads, in one-letter code: FAD-linked oxidoreductase orf1 (586 aa).

Residues 1–17 (MKSFATTVLLVTPGIYA) form the signal peptide. N29, N51, N79, N110, N146, N188, N314, N321, N358, N402, N434, and N461 each carry an N-linked (GlcNAc...) asparagine glycan. Residues 124–303 (TLGNYVSYAI…LSMTAKVHPD (180 aa)) form the FAD-binding PCMH-type domain.

This sequence belongs to the oxygen-dependent FAD-linked oxidoreductase family.

The catalysed reaction is betaenone C = betaenone A. It functions in the pathway mycotoxin biosynthesis. Its function is as follows. FAD-linked oxidoreductase; part of the gene cluster that mediates the biosynthesis of betaenones, phytotoxic polyketides involved in leaf spot disease in sugar beets. The first step of the pathway is the synthesis of dehydroprobetaenone I by the polyketide synthase bet1 and the enoyl reductase bet3 via condensation of one acetyl-CoA starter unit with 7 malonyl-CoA units and 5 methylations. The C-terminal reductase (R) domain of bet1 catalyzes the reductive release of the polyketide chain. Because bet1 lacks a designated enoylreductase (ER) domain, the required activity is provided the enoyl reductase bet3. The short-chain dehydrogenase/reductase bet4 then catalyzes reduction of dehydroprobetaenone I to probetaenone I. The cytochrome P450 monooxygenase bet2 catalyzes successive epoxidation, oxidation (resulting from epoxide opening) and hydroxylation to install a tertiary alcohol in the decaline ring to yield betaenone C from dehydroprobetaenone I and betaenone B from probetaenone I. The FAD-linked oxidoreductase (orf1) is probably responsible for the conversion of betaenone C to betaenone A via an intramolecular aldol reaction between C-1 and C-17 to form the bridged tricyclic system in betaenone A. The polypeptide is FAD-linked oxidoreductase orf1 (Neocamarosporium betae (Beet black rot fungus)).